Here is a 441-residue protein sequence, read N- to C-terminus: Cysteine--tRNA ligase (441 aa).

Cysteine 24 lines the Zn(2+) pocket. The short motif at 26 to 36 (PTIYDYIHIGN) is the 'HIGH' region element. 3 residues coordinate Zn(2+): cysteine 204, histidine 230, and glutamate 234. Positions 262-266 (KMSKS) match the 'KMSKS' region motif. Lysine 265 contacts ATP.

The protein belongs to the class-I aminoacyl-tRNA synthetase family. Monomer. Requires Zn(2+) as cofactor.

It is found in the cytoplasm. The catalysed reaction is tRNA(Cys) + L-cysteine + ATP = L-cysteinyl-tRNA(Cys) + AMP + diphosphate. This chain is Cysteine--tRNA ligase, found in Mesoplasma florum (strain ATCC 33453 / NBRC 100688 / NCTC 11704 / L1) (Acholeplasma florum).